A 162-amino-acid chain; its full sequence is Cyclic pyranopterin monophosphate synthase (162 aa).

Residues 75-77 and 113-114 contribute to the substrate site; these read LCH and ME. Asp128 is a catalytic residue.

Belongs to the MoaC family. As to quaternary structure, homohexamer; trimer of dimers.

It catalyses the reaction (8S)-3',8-cyclo-7,8-dihydroguanosine 5'-triphosphate = cyclic pyranopterin phosphate + diphosphate. Its pathway is cofactor biosynthesis; molybdopterin biosynthesis. In terms of biological role, catalyzes the conversion of (8S)-3',8-cyclo-7,8-dihydroguanosine 5'-triphosphate to cyclic pyranopterin monophosphate (cPMP). This Xanthobacter autotrophicus (strain ATCC BAA-1158 / Py2) protein is Cyclic pyranopterin monophosphate synthase.